Here is a 227-residue protein sequence, read N- to C-terminus: Guanylate kinase (227 aa).

The region spanning 21–199 (GNLFMVVAPS…ALAELECIVA (179 aa)) is the Guanylate kinase-like domain. 28–35 (APSGAGKS) is a binding site for ATP.

It belongs to the guanylate kinase family.

It localises to the cytoplasm. The catalysed reaction is GMP + ATP = GDP + ADP. In terms of biological role, essential for recycling GMP and indirectly, cGMP. This is Guanylate kinase from Burkholderia lata (strain ATCC 17760 / DSM 23089 / LMG 22485 / NCIMB 9086 / R18194 / 383).